The chain runs to 147 residues: Lysozyme C (147 aa).

A signal peptide spans 1-18 (MRSLLILVLCFLPLAALG). Positions 19–147 (KVFGRCELAA…VQAWIRGCRL (129 aa)) constitute a C-type lysozyme domain. 4 disulfide bridges follow: cysteine 24–cysteine 145, cysteine 48–cysteine 133, cysteine 82–cysteine 98, and cysteine 94–cysteine 112. Residues glutamate 53 and aspartate 70 contribute to the active site. Aspartate 119 lines the substrate pocket.

Belongs to the glycosyl hydrolase 22 family. As to quaternary structure, monomer. As to expression, in the egg white and polymorphonuclear leukocytes.

Its subcellular location is the secreted. The enzyme catalyses Hydrolysis of (1-&gt;4)-beta-linkages between N-acetylmuramic acid and N-acetyl-D-glucosamine residues in a peptidoglycan and between N-acetyl-D-glucosamine residues in chitodextrins.. Lysozymes have primarily a bacteriolytic function; those in tissues and body fluids are associated with the monocyte-macrophage system and enhance the activity of immunoagents. Has bacteriolytic activity against M.luteus. This chain is Lysozyme C (LYZ), found in Gallus gallus (Chicken).